The following is a 303-amino-acid chain: Phosphate import ATP-binding protein PstB (303 aa).

Positions leucine 56 to isoleucine 298 constitute an ABC transporter domain. Glycine 88–serine 95 contributes to the ATP binding site.

The protein belongs to the ABC transporter superfamily. Phosphate importer (TC 3.A.1.7) family. As to quaternary structure, the complex is composed of two ATP-binding proteins (PstB), two transmembrane proteins (PstC and PstA) and a solute-binding protein (PstS).

The protein resides in the cell inner membrane. The enzyme catalyses phosphate(out) + ATP + H2O = ADP + 2 phosphate(in) + H(+). Its function is as follows. Part of the ABC transporter complex PstSACB involved in phosphate import. Responsible for energy coupling to the transport system. This Acinetobacter baylyi (strain ATCC 33305 / BD413 / ADP1) protein is Phosphate import ATP-binding protein PstB.